The chain runs to 163 residues: Ribosome maturation factor RimP (163 aa).

It belongs to the RimP family.

It is found in the cytoplasm. Required for maturation of 30S ribosomal subunits. This chain is Ribosome maturation factor RimP, found in Bordetella petrii (strain ATCC BAA-461 / DSM 12804 / CCUG 43448).